Reading from the N-terminus, the 275-residue chain is 2,3,4,5-tetrahydropyridine-2,6-dicarboxylate N-succinyltransferase (275 aa).

Substrate is bound by residues Arg-104 and Asp-141.

It belongs to the transferase hexapeptide repeat family. In terms of assembly, homotrimer.

The protein localises to the cytoplasm. The catalysed reaction is (S)-2,3,4,5-tetrahydrodipicolinate + succinyl-CoA + H2O = (S)-2-succinylamino-6-oxoheptanedioate + CoA. The protein operates within amino-acid biosynthesis; L-lysine biosynthesis via DAP pathway; LL-2,6-diaminopimelate from (S)-tetrahydrodipicolinate (succinylase route): step 1/3. In Tolumonas auensis (strain DSM 9187 / NBRC 110442 / TA 4), this protein is 2,3,4,5-tetrahydropyridine-2,6-dicarboxylate N-succinyltransferase.